The primary structure comprises 219 residues: Uracil-DNA glycosylase (219 aa).

Aspartate 62 (proton acceptor) is an active-site residue.

This sequence belongs to the uracil-DNA glycosylase (UDG) superfamily. UNG family.

The protein resides in the cytoplasm. The catalysed reaction is Hydrolyzes single-stranded DNA or mismatched double-stranded DNA and polynucleotides, releasing free uracil.. Excises uracil residues from the DNA which can arise as a result of misincorporation of dUMP residues by DNA polymerase or due to deamination of cytosine. The sequence is that of Uracil-DNA glycosylase from Lactococcus lactis subsp. cremoris (strain MG1363).